A 453-amino-acid polypeptide reads, in one-letter code: MSQSPKVGFVSLGCPKALVDSEQIITQLRAEGYEISGTYDGADLVVVNTCGFIDEAVQESLDAIGEALTENGKVIVTGCLGAKSSASGSNLIEEVHPKVLAVTGPHAVGEVMQAVHSHLPKPHDPFTDLVPAAGIKLTPRHYAYLKISEGCNHRCTFCIIPSMRGDLVSRPVAEVMLEAENLFKSGVKELLVISQDTSAYGVDVKYRTGFWNGKPIKTRMTDLVAALGELAAQYGAWVRLHYVYPYPSVDEVIPLMAEGPFKGHVLPYLDVPFQHAHPEVLKRMKRPANAEKVLERVQKWREICPDLTIRSTFIAGFPGETEEQFETLLDFIREAELDRVGCFAYSPVEGATANELDGALPDDVREERRARFMEVAEEVSANRIQRKVGKTLKVLIDEVSAEGGIGRTAADAPEIDGVVYVEPAAKASKRYKVGDFVSVKITGADGHDLWGEV.

The 116-residue stretch at 5–120 folds into the MTTase N-terminal domain; the sequence is PKVGFVSLGC…VMQAVHSHLP (116 aa). Residues Cys-14, Cys-50, Cys-79, Cys-151, Cys-155, and Cys-158 each coordinate [4Fe-4S] cluster. Residues 137 to 382 form the Radical SAM core domain; it reads LTPRHYAYLK…MEVAEEVSAN (246 aa). The TRAM domain occupies 385 to 453; that stretch reads QRKVGKTLKV…ADGHDLWGEV (69 aa).

It belongs to the methylthiotransferase family. RimO subfamily. Requires [4Fe-4S] cluster as cofactor.

The protein resides in the cytoplasm. The catalysed reaction is L-aspartate(89)-[ribosomal protein uS12]-hydrogen + (sulfur carrier)-SH + AH2 + 2 S-adenosyl-L-methionine = 3-methylsulfanyl-L-aspartate(89)-[ribosomal protein uS12]-hydrogen + (sulfur carrier)-H + 5'-deoxyadenosine + L-methionine + A + S-adenosyl-L-homocysteine + 2 H(+). Catalyzes the methylthiolation of an aspartic acid residue of ribosomal protein uS12. This is Ribosomal protein uS12 methylthiotransferase RimO from Burkholderia lata (strain ATCC 17760 / DSM 23089 / LMG 22485 / NCIMB 9086 / R18194 / 383).